The following is a 354-amino-acid chain: C-C chemokine receptor type 5 (354 aa).

Topologically, residues 1-32 (MDFQGSVPTYSYDIDYGMSAPCQKINVKQIAA) are extracellular. O-linked (GalNAc...) serine glycosylation occurs at serine 6. Sulfotyrosine is present on residues tyrosine 10, tyrosine 12, and tyrosine 16. 2 disulfides stabilise this stretch: cysteine 22/cysteine 271 and cysteine 103/cysteine 180. The chain crosses the membrane as a helical span at residues 33-60 (QLLPPLYSLVFIFGFVGNMMVFLILISC). Residues 61–70 (KKLKSVTDIY) are Cytoplasmic-facing. The chain crosses the membrane as a helical span at residues 71-91 (LLNLAISDLLFLLTLPFWAHY). Residues 92-104 (AANEWVFGNIMCK) lie on the Extracellular side of the membrane. The helical transmembrane segment at 105–126 (VFTGLYHIGYFGGIFFIILLTI) threads the bilayer. Residues 127-143 (DRYLAIVHAVFALKVRT) lie on the Cytoplasmic side of the membrane. Residues 144 to 168 (VNFGVITSVVTWAVAVFASLPEIIF) form a helical membrane-spanning segment. Over 169-200 (TRSQKEGFHYTCSPHFPHTQYHFWKSFQTLKM) the chain is Extracellular. Residues 201–220 (VILSLILPLLVMVICYSGIL) traverse the membrane as a helical segment. The Cytoplasmic portion of the chain corresponds to 221–237 (HTLFRCRNEKKRHRAVR). A helical transmembrane segment spans residues 238 to 262 (LIFAIMIVYFLFWTPYNIVLLLTTF). Residues 263–279 (QEFFGLNNCSSSNRLDQ) are Extracellular-facing. A helical membrane pass occupies residues 280–303 (AMQATETLGMTHCCLNPVIYAFVG). Topologically, residues 304-354 (EKFRSYLSVFFRKHMVKRFCKRCSIFQQDNPDRASSVYTRSTGEHEVSTGL) are cytoplasmic. Residues cysteine 323 and cysteine 326 are each lipidated (S-palmitoyl cysteine). Phosphoserine; by BARK1 occurs at positions 338, 339, 344, and 351.

It belongs to the G-protein coupled receptor 1 family. Interacts with PRAF2. Efficient ligand binding to CCL3/MIP-1alpha and CCL4/MIP-1beta requires sulfation, O-glycosylation and sialic acid modifications. Glycosylation on Ser-6 is required for efficient binding of CCL4. Interacts with GRK2. Interacts with ARRB1 and ARRB2. Interacts with CNIH4. Interacts with S100A4; this interaction stimulates T-lymphocyte chemotaxis. In terms of processing, sulfated on at least 2 of the N-terminal tyrosines. Sulfation is required for efficient binding of the chemokines, CCL3 and CCL4. O-glycosylated, but not N-glycosylated. Ser-6 appears to be the major site. Also sialylated glycans present which contribute to chemokine binding. Post-translationally, palmitoylation in the C-terminal is important for cell surface expression. In terms of processing, phosphorylation on serine residues in the C-terminal is stimulated by binding CC chemokines especially by APO-RANTES.

The protein localises to the cell membrane. Functionally, receptor for a number of inflammatory CC-chemokines including CCL3/MIP-1-alpha, CCL4/MIP-1-beta and RANTES and subsequently transduces a signal by increasing the intracellular calcium ion level. May play a role in the control of granulocytic lineage proliferation or differentiation. Participates in T-lymphocyte migration to the infection site by acting as a chemotactic receptor. This chain is C-C chemokine receptor type 5 (Ccr5), found in Mus musculus (Mouse).